Reading from the N-terminus, the 363-residue chain is AA9 family lytic polysaccharide monooxygenase I (363 aa).

Positions 1 to 19 are cleaved as a signal peptide; sequence MSLFKFAAFVLGTAGSVAG. Residues histidine 20 and histidine 105 each coordinate Cu(2+). 2 disulfides stabilise this stretch: cysteine 75/cysteine 197 and cysteine 116/cysteine 120. The O2 site is built by histidine 183 and glutamine 192. Residue tyrosine 194 participates in Cu(2+) binding. Positions 248 to 257 are enriched in polar residues; the sequence is GSDSNTATSG. Disordered stretches follow at residues 248–270 and 298–363; these read GSDSNTATSGASPPSTNFSPTTT and SVSY…RTQS. Low complexity predominate over residues 258 to 270; that stretch reads ASPPSTNFSPTTT. The segment covering 298–307 has biased composition (polar residues); the sequence is SVSYSQTPWP. Residues 308–329 are compositionally biased toward low complexity; that stretch reads SSTATEATSASSSAGGSNNGHT. The segment covering 342-354 has biased composition (basic residues); the sequence is TGKKRSRLNRRRM.

The protein belongs to the polysaccharide monooxygenase AA9 family. It depends on Cu(2+) as a cofactor.

Its subcellular location is the secreted. The catalysed reaction is [(1-&gt;4)-beta-D-glucosyl]n+m + reduced acceptor + O2 = 4-dehydro-beta-D-glucosyl-[(1-&gt;4)-beta-D-glucosyl]n-1 + [(1-&gt;4)-beta-D-glucosyl]m + acceptor + H2O.. Lytic polysaccharide monooxygenase (LPMO) that depolymerizes crystalline and amorphous polysaccharides via the oxidation of scissile alpha- or beta-(1-4)-glycosidic bonds, yielding C1 or C4 oxidation products. Catalysis by LPMOs requires the reduction of the active-site copper from Cu(II) to Cu(I) by a reducing agent and H(2)O(2) or O(2) as a cosubstrate. The polypeptide is AA9 family lytic polysaccharide monooxygenase I (Emericella nidulans (strain FGSC A4 / ATCC 38163 / CBS 112.46 / NRRL 194 / M139) (Aspergillus nidulans)).